Consider the following 994-residue polypeptide: E3 ubiquitin-protein ligase Arkadia (994 aa).

Residues K19, K28, K34, K47, K59, K73, K87, K96, and K110 each participate in a glycyl lysine isopeptide (Lys-Gly) (interchain with G-Cter in SUMO2) cross-link. Positions 66-89 (HLCDDSQKQEKEMNGNQQEQEKSL) are enriched in basic and acidic residues. Positions 66–106 (HLCDDSQKQEKEMNGNQQEQEKSLVVRKKRKSQQAGPSYVQ) are disordered. The interval 120–191 (QHLGTPSDED…HKWPRTETES (72 aa)) is disordered. Residues 132–151 (SSFSDCLSSPSSSLHFGDSD) show a composition bias toward low complexity. Residues 164 to 173 (RHSQTILNAK) show a composition bias toward polar residues. K173 participates in a covalent cross-link: Glycyl lysine isopeptide (Lys-Gly) (interchain with G-Cter in SUMO2). The span at 174–184 (SRSHSARSHKW) shows a compositional bias: basic residues. Glycyl lysine isopeptide (Lys-Gly) (interchain with G-Cter in SUMO2) cross-links involve residues K198 and K218. The disordered stretch occupies residues 212-277 (CRKRFVKNNS…SSSTEGEEDL (66 aa)). The span at 234–247 (MQRKKREVLARRKY) shows a compositional bias: basic residues. The tract at residues 241–404 (VLARRKYALL…VPTTSARMES (164 aa)) is interaction with AXIN1. Positions 252–271 (SSSSSSENDLSSESSSSSST) are enriched in low complexity. The short motif at 300–304 (VVVIE) is the SUMO interaction motif 1 (SIM) element. The SUMO interaction motif 2 (SIM) signature appears at 325–331 (EVEIVTV). The interval 337 to 371 (SRSTLGHSRSHWSQGSSSHASRPQEPRNRSRISTV) is disordered. Positions 347–357 (HWSQGSSSHAS) are enriched in low complexity. The short motif at 382–386 (VVDLT) is the SUMO interaction motif 3 (SIM) element. 4 disordered regions span residues 388 to 476 (DEDE…AMPR), 508 to 537 (HGHHFQHHHHHHHTPHPAVPVSPSFSDPAC), 610 to 684 (APSQ…VDYV), and 696 to 742 (ISSH…APPA). Polar residues predominate over residues 395 to 467 (VPTTSARMES…SRRTTSSAVT (73 aa)). The span at 508 to 522 (HGHHFQHHHHHHHTP) shows a compositional bias: basic residues. Residues 670–680 (NPPPQTQPPPQ) show a composition bias toward pro residues. The interval 907–909 (YPH) is ubiquitin binding. Residues K923 and K927 each participate in a glycyl lysine isopeptide (Lys-Gly) (interchain with G-Cter in SUMO2) cross-link. Zn(2+) is bound by residues C942 and C945. The RING-type; atypical zinc-finger motif lies at 942–983 (CTICLSILEEGEDVRRLPCMHLFHQVCVDQWLITNKKCPICR). A ubiquitin binding region spans residues 957–961 (RLPCM). Positions 965 and 968 each coordinate Zn(2+).

The protein belongs to the Arkadia family. In terms of assembly, monomer. Interacts with SMAD6, SMAD7, AXIN1, AXIN2 and SKIL isoform SNON. Interacts with (phosphorylated) SMAD2 and SMAD3. Part of a complex containing RNF111, AXIN1 and SMAD7. Interacts (via SIM domains) with SUMO1 and SUMO2. As to expression, broadly expressed.

The protein localises to the nucleus. It is found in the cytoplasm. The protein resides in the PML body. The enzyme catalyses S-ubiquitinyl-[E2 ubiquitin-conjugating enzyme]-L-cysteine + [acceptor protein]-L-lysine = [E2 ubiquitin-conjugating enzyme]-L-cysteine + N(6)-ubiquitinyl-[acceptor protein]-L-lysine.. The protein operates within protein modification; protein ubiquitination. Binds free ubiquitin non-covalently via its RING-type zinc finger. Ubiquitin-binding leads to enhance the E3 ubiquitin-protein ligase activity by stabilizing the ubiquitin-conjugating enzyme E2 (donor ubiquitin) in the 'closed' conformation and activating ubiquitin transfer. E3 ubiquitin-protein ligase. Required for mesoderm patterning during embryonic development. Acts as an enhancer of the transcriptional responses of the SMAD2/SMAD3 effectors, which are activated downstream of BMP. Acts by mediating ubiquitination and degradation of SMAD inhibitors such as SMAD7, inducing their proteasomal degradation and thereby enhancing the transcriptional activity of TGF-beta and BMP. In addition to enhance transcription of SMAD2/SMAD3 effectors, also regulates their turnover by mediating their ubiquitination and subsequent degradation, coupling their activation with degradation, thereby ensuring that only effectors 'in use' are degraded. Activates SMAD3/SMAD4-dependent transcription by triggering signal-induced degradation of SNON isoform of SKIL. Associates with UBE2D2 as an E2 enzyme. Specifically binds polysumoylated chains via SUMO interaction motifs (SIMs) and mediates ubiquitination of sumoylated substrates. Catalyzes 'Lys-63'-linked ubiquitination of sumoylated XPC in response to UV irradiation, promoting nucleotide excision repair. Mediates ubiquitination and degradation of sumoylated PML. The regulation of the BMP-SMAD signaling is however independent of sumoylation and is not dependent of SUMO interaction motifs (SIMs). The protein is E3 ubiquitin-protein ligase Arkadia of Homo sapiens (Human).